The following is a 294-amino-acid chain: Diaminopimelate epimerase (294 aa).

Substrate is bound by residues Asn-15, Gln-47, and Asn-67. Cys-76 serves as the catalytic Proton donor. Substrate contacts are provided by residues 77–78 (GN), Asn-163, Asn-197, and 215–216 (ER). Residue Cys-224 is the Proton acceptor of the active site. 225 to 226 (GS) is a substrate binding site.

The protein belongs to the diaminopimelate epimerase family. As to quaternary structure, homodimer.

Its subcellular location is the cytoplasm. It carries out the reaction (2S,6S)-2,6-diaminopimelate = meso-2,6-diaminopimelate. It functions in the pathway amino-acid biosynthesis; L-lysine biosynthesis via DAP pathway; DL-2,6-diaminopimelate from LL-2,6-diaminopimelate: step 1/1. Functionally, catalyzes the stereoinversion of LL-2,6-diaminopimelate (L,L-DAP) to meso-diaminopimelate (meso-DAP), a precursor of L-lysine and an essential component of the bacterial peptidoglycan. The chain is Diaminopimelate epimerase from Mesorhizobium japonicum (strain LMG 29417 / CECT 9101 / MAFF 303099) (Mesorhizobium loti (strain MAFF 303099)).